Reading from the N-terminus, the 337-residue chain is Basic membrane protein A1 (337 aa).

The N-terminal stretch at 1–17 (MNKLLLLILFECIIFLS) is a signal peptide. The N-palmitoyl cysteine moiety is linked to residue Cys-18. Cys-18 is lipidated: S-diacylglycerol cysteine.

It belongs to the BMP lipoprotein family. As to quaternary structure, monomer.

It localises to the cell inner membrane. Immunogenic protein. May be part of an ABC-type nucleoside uptake system involved in the purine salvage pathway. This is Basic membrane protein A1 (bmpA1) from Borrelia garinii subsp. bavariensis (strain ATCC BAA-2496 / DSM 23469 / PBi) (Borreliella bavariensis).